The following is a 262-amino-acid chain: Acyl-[acyl-carrier-protein]--UDP-N-acetylglucosamine O-acyltransferase (262 aa).

It belongs to the transferase hexapeptide repeat family. LpxA subfamily. Homotrimer.

It localises to the cytoplasm. It carries out the reaction a (3R)-hydroxyacyl-[ACP] + UDP-N-acetyl-alpha-D-glucosamine = a UDP-3-O-[(3R)-3-hydroxyacyl]-N-acetyl-alpha-D-glucosamine + holo-[ACP]. It participates in glycolipid biosynthesis; lipid IV(A) biosynthesis; lipid IV(A) from (3R)-3-hydroxytetradecanoyl-[acyl-carrier-protein] and UDP-N-acetyl-alpha-D-glucosamine: step 1/6. Functionally, involved in the biosynthesis of lipid A, a phosphorylated glycolipid that anchors the lipopolysaccharide to the outer membrane of the cell. The protein is Acyl-[acyl-carrier-protein]--UDP-N-acetylglucosamine O-acyltransferase of Paraburkholderia xenovorans (strain LB400).